The chain runs to 1186 residues: ATP-dependent helicase/deoxyribonuclease subunit B (1186 aa).

It belongs to the helicase family. AddB/RexB type 2 subfamily. As to quaternary structure, heterodimer of AddA and RexB. Mg(2+) is required as a cofactor.

The heterodimer acts as both an ATP-dependent DNA helicase and an ATP-dependent, dual-direction single-stranded exonuclease. Recognizes the chi site generating a DNA molecule suitable for the initiation of homologous recombination. This subunit has 5' -&gt; 3' nuclease activity but not helicase activity. The protein is ATP-dependent helicase/deoxyribonuclease subunit B of Latilactobacillus sakei subsp. sakei (strain 23K) (Lactobacillus sakei subsp. sakei).